Reading from the N-terminus, the 287-residue chain is Heavy metal-associated isoprenylated plant protein 4 (287 aa).

HMA domains are found at residues 14-80 (IITA…VELI) and 112-176 (IRTT…KHAE). A metal cation contacts are provided by cysteine 25, cysteine 28, cysteine 123, and cysteine 126. Residues 179 to 235 (SSKTEEEKKKEEEDKKKKEEEDKKKKEDEKKKEEEKKKEEENKKKEGEKKKEEVKVE) adopt a coiled-coil conformation. The interval 181-232 (KTEEEKKKEEEDKKKKEEEDKKKKEDEKKKEEEKKKEEENKKKEGEKKKEEV) is disordered. Cysteine methyl ester is present on cysteine 284. Cysteine 284 carries the S-farnesyl cysteine lipid modification. A propeptide spans 285-287 (RIV) (removed in mature form).

It belongs to the HIPP family.

Functionally, heavy-metal-binding protein. This Arabidopsis thaliana (Mouse-ear cress) protein is Heavy metal-associated isoprenylated plant protein 4.